We begin with the raw amino-acid sequence, 320 residues long: MRVEIDHRNSGGGKLRHPEKQHRPDNPIQRKPAWIRVKAPNHPVYHETRALMREAKLVTVCEEAACPNIGECWSQRHATMMIMGEICTRACAFCNVTTGQPAPLAADEPARVAEAVARLGLQHVVITSVDRDDLDDGGAAHFAAVIGAIRAAAPSTTIEILTPDFLRKPGALEVVVAARPDVFNHNLETVPRLYPSIRPGARYYQSLRLLDRVKQLDPSIFTKSGLMAGLGEDRGEVGQVMDDLRIADVDFLTIGQYLQPTVKHAAVDRFVTPDEFADLAAMARAKGFLMVSATPLTRSSYHADADFAALREARAARHAA.

The tract at residues Met1–Pro27 is disordered. Basic and acidic residues predominate over residues Arg16–Asp25. [4Fe-4S] cluster contacts are provided by Cys61, Cys66, Cys72, Cys87, Cys91, Cys94, and Ser300. Residues Trp73–Leu289 form the Radical SAM core domain.

It belongs to the radical SAM superfamily. Lipoyl synthase family. [4Fe-4S] cluster is required as a cofactor.

It localises to the cytoplasm. The catalysed reaction is [[Fe-S] cluster scaffold protein carrying a second [4Fe-4S](2+) cluster] + N(6)-octanoyl-L-lysyl-[protein] + 2 oxidized [2Fe-2S]-[ferredoxin] + 2 S-adenosyl-L-methionine + 4 H(+) = [[Fe-S] cluster scaffold protein] + N(6)-[(R)-dihydrolipoyl]-L-lysyl-[protein] + 4 Fe(3+) + 2 hydrogen sulfide + 2 5'-deoxyadenosine + 2 L-methionine + 2 reduced [2Fe-2S]-[ferredoxin]. It functions in the pathway protein modification; protein lipoylation via endogenous pathway; protein N(6)-(lipoyl)lysine from octanoyl-[acyl-carrier-protein]: step 2/2. Its function is as follows. Catalyzes the radical-mediated insertion of two sulfur atoms into the C-6 and C-8 positions of the octanoyl moiety bound to the lipoyl domains of lipoate-dependent enzymes, thereby converting the octanoylated domains into lipoylated derivatives. This is Lipoyl synthase from Acidiphilium cryptum (strain JF-5).